A 228-amino-acid polypeptide reads, in one-letter code: Protein Thf1 (228 aa).

Positions 201–223 (IKRSKEVVDELSQTERRKREERA) form a coiled coil. The tract at residues 209–228 (DELSQTERRKREERAVSQPG) is disordered.

The protein belongs to the THF1 family.

In terms of biological role, may be involved in photosynthetic membrane biogenesis. The polypeptide is Protein Thf1 (Gloeobacter violaceus (strain ATCC 29082 / PCC 7421)).